Reading from the N-terminus, the 302-residue chain is Phospho-N-acetylmuramoyl-pentapeptide-transferase (302 aa).

9 helical membrane passes run 1–21 (MIAA…KLFR), 42–62 (GTPT…GMIS), 68–88 (VLLG…LSVV), 123–143 (FFGF…LVIV), 154–174 (GLDG…WFFL), 178–198 (GVSE…LVFN), 204–224 (IFMG…VSVL), 229–249 (FYLV…ILQV), and 279–299 (IVAV…EIFG).

Belongs to the glycosyltransferase 4 family. MraY subfamily. Mg(2+) serves as cofactor.

The protein resides in the cell inner membrane. It carries out the reaction UDP-N-acetyl-alpha-D-muramoyl-L-alanyl-gamma-D-glutamyl-meso-2,6-diaminopimeloyl-D-alanyl-D-alanine + di-trans,octa-cis-undecaprenyl phosphate = di-trans,octa-cis-undecaprenyl diphospho-N-acetyl-alpha-D-muramoyl-L-alanyl-D-glutamyl-meso-2,6-diaminopimeloyl-D-alanyl-D-alanine + UMP. The protein operates within cell wall biogenesis; peptidoglycan biosynthesis. Its function is as follows. Catalyzes the initial step of the lipid cycle reactions in the biosynthesis of the cell wall peptidoglycan: transfers peptidoglycan precursor phospho-MurNAc-pentapeptide from UDP-MurNAc-pentapeptide onto the lipid carrier undecaprenyl phosphate, yielding undecaprenyl-pyrophosphoryl-MurNAc-pentapeptide, known as lipid I. This is Phospho-N-acetylmuramoyl-pentapeptide-transferase from Thermotoga petrophila (strain ATCC BAA-488 / DSM 13995 / JCM 10881 / RKU-1).